Consider the following 572-residue polypeptide: Proline--tRNA ligase (572 aa).

Belongs to the class-II aminoacyl-tRNA synthetase family. ProS type 1 subfamily. As to quaternary structure, homodimer.

It is found in the cytoplasm. The catalysed reaction is tRNA(Pro) + L-proline + ATP = L-prolyl-tRNA(Pro) + AMP + diphosphate. Its function is as follows. Catalyzes the attachment of proline to tRNA(Pro) in a two-step reaction: proline is first activated by ATP to form Pro-AMP and then transferred to the acceptor end of tRNA(Pro). As ProRS can inadvertently accommodate and process non-cognate amino acids such as alanine and cysteine, to avoid such errors it has two additional distinct editing activities against alanine. One activity is designated as 'pretransfer' editing and involves the tRNA(Pro)-independent hydrolysis of activated Ala-AMP. The other activity is designated 'posttransfer' editing and involves deacylation of mischarged Ala-tRNA(Pro). The misacylated Cys-tRNA(Pro) is not edited by ProRS. The polypeptide is Proline--tRNA ligase (Escherichia coli O127:H6 (strain E2348/69 / EPEC)).